A 124-amino-acid polypeptide reads, in one-letter code: Cholera enterotoxin subunit B (124 aa).

An N-terminal signal peptide occupies residues 1-21 (MIKLKFGVFFTVLLSSAYAHG). The cysteines at positions 30 and 107 are disulfide-linked.

In terms of assembly, the holotoxin (choleragen) consists of a pentameric ring of B subunits whose central pore is occupied by the A subunit. The A subunit contains two chains, A1 and A2, linked by a disulfide bridge.

Its subcellular location is the secreted. The protein resides in the host cell membrane. In terms of biological role, the B subunit pentameric ring directs the A subunit to its target by binding to the GM1 gangliosides present on the surface of the intestinal epithelial cells. It can bind five GM1 gangliosides. It has no toxic activity by itself. The chain is Cholera enterotoxin subunit B (ctxB) from Vibrio cholerae serotype O1 (strain ATCC 39315 / El Tor Inaba N16961).